The chain runs to 23 residues: Septenin 2 (23 aa).

Expressed in skin glands.

It is found in the secreted. Functionally, may act as an antimicrobial peptide. This chain is Septenin 2, found in Osteopilus septentrionalis (Cuban treefrog).